The primary structure comprises 193 residues: Holliday junction branch migration complex subunit RuvA (193 aa).

The domain I stretch occupies residues 1-64; that stretch reads MIGRIAGTLL…EDAHLLYGFL (64 aa). The segment at 65–139 is domain II; it reads TPPERSTFRE…GKLGADLGPL (75 aa). The segment at 139–143 is flexible linker; the sequence is LAGAA. Residues 144–193 form a domain III region; the sequence is SPSDHATDILNALVALGYSEKEALAAIKNVPAGTGVSEGIKLSLKALSKA.

Belongs to the RuvA family. In terms of assembly, homotetramer. Forms an RuvA(8)-RuvB(12)-Holliday junction (HJ) complex. HJ DNA is sandwiched between 2 RuvA tetramers; dsDNA enters through RuvA and exits via RuvB. An RuvB hexamer assembles on each DNA strand where it exits the tetramer. Each RuvB hexamer is contacted by two RuvA subunits (via domain III) on 2 adjacent RuvB subunits; this complex drives branch migration. In the full resolvosome a probable DNA-RuvA(4)-RuvB(12)-RuvC(2) complex forms which resolves the HJ.

The protein localises to the cytoplasm. Its function is as follows. The RuvA-RuvB-RuvC complex processes Holliday junction (HJ) DNA during genetic recombination and DNA repair, while the RuvA-RuvB complex plays an important role in the rescue of blocked DNA replication forks via replication fork reversal (RFR). RuvA specifically binds to HJ cruciform DNA, conferring on it an open structure. The RuvB hexamer acts as an ATP-dependent pump, pulling dsDNA into and through the RuvAB complex. HJ branch migration allows RuvC to scan DNA until it finds its consensus sequence, where it cleaves and resolves the cruciform DNA. In Burkholderia mallei (strain NCTC 10229), this protein is Holliday junction branch migration complex subunit RuvA.